Reading from the N-terminus, the 378-residue chain is Protein RecA (378 aa).

Gly65–Thr72 is an ATP binding site. The disordered stretch occupies residues Ala325–Lys378. Basic and acidic residues predominate over residues Asp339 to Asp351.

This sequence belongs to the RecA family.

It is found in the cytoplasm. Its function is as follows. Can catalyze the hydrolysis of ATP in the presence of single-stranded DNA, the ATP-dependent uptake of single-stranded DNA by duplex DNA, and the ATP-dependent hybridization of homologous single-stranded DNAs. It interacts with LexA causing its activation and leading to its autocatalytic cleavage. This is Protein RecA from Lactiplantibacillus pentosus (Lactobacillus pentosus).